The sequence spans 485 residues: UBX domain-containing protein 11 (485 aa).

The interval 1 to 26 (MSSPLASLSKTRKVPLESEPVNPGRR) is disordered. Positions 67–143 (HDSELLTSMA…VGEMERFLND (77 aa)) form a coiled coil. The SEP domain occupies 224–288 (LEPIPLKLYR…VSDLRNQVYP (65 aa)). A UBX domain is found at 386–463 (PVPPLSMLRI…GLVPNATLLL (78 aa)). Serine 479 and serine 483 each carry phosphoserine.

Interacts with GNA12, GNA13, RND1, RND2 and RND3. In terms of tissue distribution, strongly expressed in testis. Also expressed in lung, brain and thymus.

It is found in the cytoplasm. It localises to the cytoskeleton. May be involved in the reorganization of actin cytoskeleton mediated by RND1, RND2 and RND3. Promotes RHOA activation mediated by GNA12 and GNA13. The polypeptide is UBX domain-containing protein 11 (Ubxn11) (Rattus norvegicus (Rat)).